The chain runs to 492 residues: Protein nucleotidyltransferase YdiU (492 aa).

8 residues coordinate ATP: Gly91, Gly93, Arg94, Lys114, Asp126, Gly127, Arg180, and Arg187. The active-site Proton acceptor is Asp256. Asn257 and Asp266 together coordinate Mg(2+). ATP is bound at residue Asp266.

The protein belongs to the SELO family. Mg(2+) serves as cofactor. Requires Mn(2+) as cofactor.

It carries out the reaction L-seryl-[protein] + ATP = 3-O-(5'-adenylyl)-L-seryl-[protein] + diphosphate. It catalyses the reaction L-threonyl-[protein] + ATP = 3-O-(5'-adenylyl)-L-threonyl-[protein] + diphosphate. The catalysed reaction is L-tyrosyl-[protein] + ATP = O-(5'-adenylyl)-L-tyrosyl-[protein] + diphosphate. The enzyme catalyses L-histidyl-[protein] + UTP = N(tele)-(5'-uridylyl)-L-histidyl-[protein] + diphosphate. It carries out the reaction L-seryl-[protein] + UTP = O-(5'-uridylyl)-L-seryl-[protein] + diphosphate. It catalyses the reaction L-tyrosyl-[protein] + UTP = O-(5'-uridylyl)-L-tyrosyl-[protein] + diphosphate. In terms of biological role, nucleotidyltransferase involved in the post-translational modification of proteins. It can catalyze the addition of adenosine monophosphate (AMP) or uridine monophosphate (UMP) to a protein, resulting in modifications known as AMPylation and UMPylation. The polypeptide is Protein nucleotidyltransferase YdiU (Synechococcus sp. (strain ATCC 27144 / PCC 6301 / SAUG 1402/1) (Anacystis nidulans)).